Reading from the N-terminus, the 134-residue chain is Profilin-3 (134 aa).

Cysteine 13 and cysteine 118 are disulfide-bonded. Positions 84–100 (AVIRGKKGSGGITIKKT) match the Involved in PIP2 interaction motif. Threonine 114 carries the post-translational modification Phosphothreonine.

It belongs to the profilin family. In terms of assembly, occurs in many kinds of cells as a complex with monomeric actin in a 1:1 ratio. In terms of processing, phosphorylated by MAP kinases.

The protein resides in the cytoplasm. Its subcellular location is the cytoskeleton. Functionally, binds to actin and affects the structure of the cytoskeleton. At high concentrations, profilin prevents the polymerization of actin, whereas it enhances it at low concentrations. The sequence is that of Profilin-3 from Olea europaea (Common olive).